The sequence spans 530 residues: Type 2 DNA topoisomerase 6 subunit B (530 aa).

Residues Asn42, Asp76, 97–98 (SK), 106–113 (GMYGLGVK), and Lys427 contribute to the ATP site.

Belongs to the TOP6B family. As to quaternary structure, homodimer. Heterotetramer of two Top6A and two Top6B chains.

The enzyme catalyses ATP-dependent breakage, passage and rejoining of double-stranded DNA.. Functionally, relaxes both positive and negative superturns and exhibits a strong decatenase activity. The protein is Type 2 DNA topoisomerase 6 subunit B of Saccharolobus islandicus (strain Y.N.15.51 / Yellowstone #2) (Sulfolobus islandicus).